The sequence spans 341 residues: Ribosomal RNA small subunit methyltransferase H (341 aa).

S-adenosyl-L-methionine is bound by residues 47 to 49 (GGY), Asp64, Phe91, Asp109, and Gln116.

It belongs to the methyltransferase superfamily. RsmH family.

The protein localises to the cytoplasm. It catalyses the reaction cytidine(1402) in 16S rRNA + S-adenosyl-L-methionine = N(4)-methylcytidine(1402) in 16S rRNA + S-adenosyl-L-homocysteine + H(+). Functionally, specifically methylates the N4 position of cytidine in position 1402 (C1402) of 16S rRNA. This chain is Ribosomal RNA small subunit methyltransferase H, found in Sinorhizobium medicae (strain WSM419) (Ensifer medicae).